The sequence spans 391 residues: Processive diacylglycerol beta-glucosyltransferase (391 aa).

The protein belongs to the glycosyltransferase 28 family. UgtP subfamily.

It localises to the cell membrane. It catalyses the reaction a 1,2-diacyl-3-O-(beta-D-glucopyranosyl)-sn-glycerol + UDP-alpha-D-glucose = a 1,2-diacyl-3-O-(beta-D-Glc-(1-&gt;6)-beta-D-Glc)-sn-glycerol + UDP + H(+). The enzyme catalyses a 1,2-diacyl-sn-glycerol + UDP-alpha-D-glucose = a 1,2-diacyl-3-O-(beta-D-glucopyranosyl)-sn-glycerol + UDP + H(+). The protein operates within glycolipid metabolism; diglucosyl-diacylglycerol biosynthesis. Its function is as follows. Processive glucosyltransferase involved in the biosynthesis of both the bilayer- and non-bilayer-forming membrane glucolipids. Is able to successively transfer two glucosyl residues to diacylglycerol (DAG), thereby catalyzing the formation of beta-monoglucosyl-DAG (3-O-(beta-D-glucopyranosyl)-1,2-diacyl-sn-glycerol) and beta-diglucosyl-DAG (3-O-(beta-D-glucopyranosyl-beta-(1-&gt;6)-D-glucopyranosyl)-1,2-diacyl-sn-glycerol). Beta-diglucosyl-DAG is the predominant glycolipid found in Bacillales and is also used as a membrane anchor for lipoteichoic acid (LTA). The protein is Processive diacylglycerol beta-glucosyltransferase of Staphylococcus epidermidis (strain ATCC 12228 / FDA PCI 1200).